A 371-amino-acid chain; its full sequence is Glutamate 5-kinase (371 aa).

Lys-14 contributes to the ATP binding site. 3 residues coordinate substrate: Ser-54, Asp-141, and Asn-153. Residue 173 to 174 participates in ATP binding; that stretch reads TD. Residues 280 to 357 form the PUA domain; that stretch reads AGDLILDDGA…TQIEKLLGYI (78 aa).

This sequence belongs to the glutamate 5-kinase family.

The protein localises to the cytoplasm. It catalyses the reaction L-glutamate + ATP = L-glutamyl 5-phosphate + ADP. It functions in the pathway amino-acid biosynthesis; L-proline biosynthesis; L-glutamate 5-semialdehyde from L-glutamate: step 1/2. Functionally, catalyzes the transfer of a phosphate group to glutamate to form L-glutamate 5-phosphate. The polypeptide is Glutamate 5-kinase (Aromatoleum aromaticum (strain DSM 19018 / LMG 30748 / EbN1) (Azoarcus sp. (strain EbN1))).